Here is a 378-residue protein sequence, read N- to C-terminus: Sphingosine 1-phosphate receptor 3 (378 aa).

At 1–44 (MATTHAQGHQPVLGNDTLREHYDYVGKLAGRLRDPPEGGTLITT) the chain is on the extracellular side. N-linked (GlcNAc...) asparagine glycosylation occurs at N15. The helical transmembrane segment at 45–65 (ILFLVTCSFIVLENLMVLIAI) threads the bilayer. The Cytoplasmic portion of the chain corresponds to 66-74 (WKNNKFHNR). Residues 75-95 (MYFFIGNLALCDLLAGIAYKV) traverse the membrane as a helical segment. Residues 96-115 (NILMSGRKTFSLSPTVWFLR) are Extracellular-facing. The chain crosses the membrane as a helical span at residues 116–136 (EGSMFVALGASTCSLLAIAIE). Residues 137-154 (RHLTMIKMRPYDANKKHR) are Cytoplasmic-facing. Residues 155 to 175 (VFLLIGMCWLIAFSLGALPIL) traverse the membrane as a helical segment. Residues 176 to 196 (GWNCLENFPDCSTILPLYSKK) lie on the Extracellular side of the membrane. A helical membrane pass occupies residues 197–217 (YIAFLISIFTAILVTIVILYA). Over 218 to 244 (RIYCLVKSSSRRVANHNSERSMALLRT) the chain is Cytoplasmic. The chain crosses the membrane as a helical span at residues 245 to 265 (VVIVVSVFIACWSPLFILFLI). Residues 266–281 (DVACRAKECSILFKSQ) lie on the Extracellular side of the membrane. A helical membrane pass occupies residues 282 to 302 (WFIMLAVLNSAMNPVIYTLAS). Residues 303–378 (KEMRRAFFRL…RSFQNGVLCK (76 aa)) lie on the Cytoplasmic side of the membrane. A disordered region spans residues 323-354 (TQASPMQPALDPSRSKSSSSNNSSHSPKVKED). S326 carries the post-translational modification Phosphoserine. Residues 337–348 (SKSSSSNNSSHS) show a composition bias toward low complexity.

Belongs to the G-protein coupled receptor 1 family. Most abundant in heart, lung, kidney and spleen; low but detectable in brain, thymus, muscle and testis; and nearly undetectable in liver, stomach, and intestine. Expressed in embryonic lung from embryonic day 14-18. Also abundantly detected in embryonic nasal cartilage, sphenoid bone, vena cava, Meckel's cartilage/incisor teeth, genital tubercle and bladder.

It localises to the cell membrane. Its function is as follows. Receptor for the lysosphingolipid sphingosine 1-phosphate (S1P). S1P is a bioactive lysophospholipid that elicits diverse physiological effect on most types of cells and tissues. The sequence is that of Sphingosine 1-phosphate receptor 3 (S1pr3) from Mus musculus (Mouse).